The chain runs to 79 residues: D-alanyl carrier protein (79 aa).

Positions 1-77 constitute a Carrier domain; that stretch reads MDVKETILNI…KIISGVVELM (77 aa). The residue at position 35 (serine 35) is an O-(pantetheine 4'-phosphoryl)serine.

This sequence belongs to the DltC family. In terms of processing, 4'-phosphopantetheine is transferred from CoA to a specific serine of apo-DCP.

Its subcellular location is the cytoplasm. The protein operates within cell wall biogenesis; lipoteichoic acid biosynthesis. Functionally, carrier protein involved in the D-alanylation of lipoteichoic acid (LTA). The loading of thioester-linked D-alanine onto DltC is catalyzed by D-alanine--D-alanyl carrier protein ligase DltA. The DltC-carried D-alanyl group is further transferred to cell membrane phosphatidylglycerol (PG) by forming an ester bond, probably catalyzed by DltD. D-alanylation of LTA plays an important role in modulating the properties of the cell wall in Gram-positive bacteria, influencing the net charge of the cell wall. The chain is D-alanyl carrier protein from Streptococcus suis (strain 05ZYH33).